A 607-amino-acid polypeptide reads, in one-letter code: Threonine--tRNA ligase (607 aa).

The tract at residues 200–502 is catalytic; that stretch reads DHRKLGRELG…LIEEYAGDFP (303 aa). Zn(2+)-binding residues include Cys-299, His-350, and His-479.

Belongs to the class-II aminoacyl-tRNA synthetase family. Homodimer. Requires Zn(2+) as cofactor.

The protein resides in the cytoplasm. The enzyme catalyses tRNA(Thr) + L-threonine + ATP = L-threonyl-tRNA(Thr) + AMP + diphosphate + H(+). Catalyzes the attachment of threonine to tRNA(Thr) in a two-step reaction: L-threonine is first activated by ATP to form Thr-AMP and then transferred to the acceptor end of tRNA(Thr). Also edits incorrectly charged L-seryl-tRNA(Thr). The protein is Threonine--tRNA ligase of Synechococcus sp. (strain ATCC 27144 / PCC 6301 / SAUG 1402/1) (Anacystis nidulans).